The sequence spans 271 residues: CAAX prenyl protease 2 (271 aa).

The Extracellular portion of the chain corresponds to 1–9; the sequence is MISSYKYNP. The helical transmembrane segment at 10-30 threads the bilayer; the sequence is KLYFLSTFVVTYILWFTGAYL. Residues 31-38 lie on the Cytoplasmic side of the membrane; that stretch reads SFSSTYSG. The helical transmembrane segment at 39–59 threads the bilayer; that stretch reads IYMLIMLPGLMAPFIISTILI. The Extracellular portion of the chain corresponds to 60–82; the sequence is AKSKNNELKKDFINRLFNLKLIN. Residues 83-105 form a helical membrane-spanning segment; it reads LKTIPVVFLLMPAVILLSILLSI. The Cytoplasmic portion of the chain corresponds to 106–125; it reads PFGGSISQFQFSGGFSFSTD. A helical transmembrane segment spans residues 126-149; it reads FVPVLFLLLLAATFEELGWRGYAF. Catalysis depends on Glu-140, which acts as the Proton donor/acceptor. At 150 to 159 the chain is on the extracellular side; the sequence is DSLQSRYSLF. The helical transmembrane segment at 160-179 threads the bilayer; that stretch reads KASILFGIFWSLWHFPLIFV. The Proton donor/acceptor role is filled by His-173. The Cytoplasmic segment spans residues 180-192; that stretch reads NNSYQYEIFNQSI. A helical membrane pass occupies residues 193–213; that stretch reads WYGLNFFLSILPMGIIITWMC. Residues 214 to 219 are Extracellular-facing; sequence LKNRKS. Residues 220–237 traverse the membrane as a helical segment; sequence IILAIIFHFLINLNQELL. At 238-243 the chain is on the cytoplasmic side; it reads AITQDT. Residues 244-263 form a helical membrane-spanning segment; it reads KIIETGVLFLVAAAIILYDK. Residues 264–271 are Extracellular-facing; it reads KMFFEKLG.

The protein belongs to the peptidase U48 family.

The protein resides in the cell membrane. It carries out the reaction Hydrolyzes the peptide bond -P2-(S-farnesyl or geranylgeranyl)C-P1'-P2'-P3'-COOH where P1' and P2' are amino acids with aliphatic sidechains and P3' is any C-terminal residue.. Activity is unaffected by metalloprotease inhibitors 5 mM EDTA and 5 mM Zn(2+). Activity partially inhibited by 1,10-phenanthroline and 1,7-phenanthroline. Protease involved in the processing of a variety of prenylated proteins containing the C-terminal CAAX motif, where C is a cysteine modified with an isoprenoid lipid, A is an aliphatic amino acid and X is any C-terminal amino acid. Proteolytically removes the C-terminal three residues of farnesylated proteins, leaving the prenylated cysteine as the new C-terminus. Hydrolysis depends on a farnesylated cysteine residue and no activity is shown towards geranylgeranylated peptides. This chain is CAAX prenyl protease 2, found in Methanococcus maripaludis (strain DSM 14266 / JCM 13030 / NBRC 101832 / S2 / LL).